A 206-amino-acid chain; its full sequence is Adenylate kinase (206 aa).

10-15 lines the ATP pocket; that stretch reads GAGKGT. The tract at residues 30–59 is NMP; the sequence is STGDILREAVQKGTPLGKKAKEYMERGELV. AMP contacts are provided by residues Thr31, 57 to 59, 82 to 85, and Gln89; these read ELV and GFPR. ATP-binding positions include Arg120, Arg124, and 133–134; that span reads VY. Positions 123 to 153 are LID; that stretch reads GRRINPETGEVYHVKYNPPPPGVKVIQREDD. Arg161 contributes to the AMP binding site. Residue Lys189 coordinates ATP.

This sequence belongs to the adenylate kinase family. As to quaternary structure, monomer.

The protein resides in the cytoplasm. It carries out the reaction AMP + ATP = 2 ADP. It functions in the pathway purine metabolism; AMP biosynthesis via salvage pathway; AMP from ADP: step 1/1. In terms of biological role, catalyzes the reversible transfer of the terminal phosphate group between ATP and AMP. Plays an important role in cellular energy homeostasis and in adenine nucleotide metabolism. The sequence is that of Adenylate kinase from Aquifex aeolicus (strain VF5).